The sequence spans 410 residues: Mating-type locus allele B4 protein (410 aa).

A variable domain between B alleles region spans residues 1-110 (MSSDPKISIT…ANASSPVVGC (110 aa)). Residues 107 to 184 (VVGCRELSED…NARRRSGWSH (78 aa)) constitute a DNA-binding region (homeobox; TALE-type). The segment at 111-410 (RELSEDLPAY…PFLCLSVAFV (300 aa)) is highly conserved between B alleles. Disordered stretches follow at residues 202–241 (RAKLSSSNQSTPPSPTSEYPSNNLDDFLSDNLGRPLTPAD), 278–335 (TPKP…TPEL), and 375–394 (RGNRKVKALPKRAGKQQPDE). The segment covering 206–222 (SSSNQSTPPSPTSEYPS) has biased composition (low complexity). Positions 276–308 (KKTPKPGMPRPVTTVAKRQPARKTKPAAKPKSR) match the Nuclear localization signal motif. Residues 294–307 (QPARKTKPAAKPKS) show a composition bias toward basic residues. Positions 312–335 (PRASTTPSIDSTLDSSKLESTPEL) are enriched in polar residues. The segment at 333-410 (PELSMCSTAD…PFLCLSVAFV (78 aa)) is not essential for B4 function. Over residues 375 to 388 (RGNRKVKALPKRAG) the composition is skewed to basic residues.

It belongs to the TALE/M-ATYP homeobox family.

It localises to the nucleus. Functionally, the B locus has at least 25 alleles, and any combination of two different B alleles yields a multimeric regulatory protein, that activates genes responsible for the pathogenicity and for the sexual development of the fungus within the corn plant. The polypeptide is Mating-type locus allele B4 protein (Mycosarcoma maydis (Corn smut fungus)).